The chain runs to 394 residues: MLVFIFLAVRLSSENESSSQTNDCAYFMRQCLTDTDGCKQSWRSMEDACLVSGDSCKINNPLPCNLSIQSLVEKHFQFKGCLCTDDLHCTVNKIFGKKCTNKTDSMKKDNKYKRNLTTPLYHDTGFKQMQSCLEVTEACVGDVVCNAQLALYLKACTANGNLCDVKHCQAAIRFFYQNMPFNTAQMLAFCDCAQSDIPCQQSKETLHSKPCALNVVPPPTCLSVIHTCRNDELCRTYYRTFQTECWPHVAGKCREDETCISMLGKQDLTCSGSDSCRAAYLGTFGTVLQVPCACRSITQGEEPLCMAFQHMLHSKSCFNYPTPNVKDISSYERKHSKEITLTGFNSPFSGELIYVVVCMVVTSGILSLVMLKLRIPSKKRDPAPIEIAGAVIIQ.

Residues 1–19 (MLVFIFLAVRLSSENESSS) form the signal peptide. Topologically, residues 20–350 (QTNDCAYFMR…LTGFNSPFSG (331 aa)) are extracellular. N-linked (GlcNAc...) asparagine glycosylation is found at Asn65, Asn101, and Asn115. 11 disulfides stabilise this stretch: Cys132-Cys190, Cys139-Cys145, Cys156-Cys168, Cys163-Cys211, Cys192-Cys199, Cys221-Cys292, Cys228-Cys234, Cys245-Cys276, Cys253-Cys259, Cys270-Cys317, and Cys294-Cys305. A required for interaction with GDF15 region spans residues 150–229 (ALYLKACTAN…TCLSVIHTCR (80 aa)). The chain crosses the membrane as a helical span at residues 351–371 (ELIYVVVCMVVTSGILSLVML). At 372–394 (KLRIPSKKRDPAPIEIAGAVIIQ) the chain is on the cytoplasmic side.

It belongs to the GDNFR family. Interacts (via the extracellular domain) with GDF15 and RET; receptor of GDF15, mediates cellular signaling through interaction with RET after GDF15-binding. Interaction with RET requires previous GDF15-binding. Cleaved and inactivated by MMP14, inhibiting the GDF15-GFRAL aversive response. Expressed in the brainstem, restricted to cells in the area postrema and the immediately adjacent region of the nucleus tractus solitarius. Detected at low levels in testis.

The protein resides in the cell membrane. Its function is as follows. Brainstem-restricted receptor for GDF15 hormone, which triggers an aversive response, characterized by nausea, vomiting, and/or loss of appetite in response to various stresses. The aversive response is both required to reduce continuing exposure to those stresses at the time of exposure and to promote avoidance behavior in the future. The GDF15-GFRAL aversive response is triggered by stresses, such as anticancer drugs (camptothecin or cisplatin), cancers or drugs such as metformin. Upon interaction with its ligand, GDF15, mediates the GDF15-induced autophosphorylation and activation of the RET tyrosine kinase receptor, leading to activation of MAPK- and AKT- signaling pathways. Ligand-binding activates GFRAL-expressing neurons localized in the area postrema and nucleus tractus solitarius of the brainstem. The GDF15-GFRAL signal induces expression of genes involved in metabolism, such as lipid metabolism in adipose tissues. The polypeptide is GDNF family receptor alpha-like (Rattus norvegicus (Rat)).